A 507-amino-acid polypeptide reads, in one-letter code: Phosphoprotein (507 aa).

The span at 31-51 (EVSSLRDQTCNPGQENGTTGM) shows a compositional bias: polar residues. Disordered regions lie at residues 31–86 (EVSS…CGER), 123–172 (IEDA…GYSF), and 242–307 (GIVA…DSEY). The segment covering 147-160 (SLDDSTEDSGEDYS) has biased composition (acidic residues). Position 151 is a phosphoserine (Ser151). 2 stretches are compositionally biased toward polar residues: residues 246–271 (GSTS…SAGN) and 289–300 (SGTQLPPRTSNE). The multimerization stretch occupies residues 304–376 (DSEYDDELFS…LSSIMIAIPG (73 aa)). Positions 310-339 (ELFSEIQEIRSAITKLTEDNQAILTKLDTL) form a coiled coil. The tract at residues 459–507 (PSKAVLASLIRSSRVDQSHKHNMLALLKNIKGDDNLNEFYQMVKSITHA) is interaction with the nucleocapsid (N-RNA).

The protein belongs to the morbillivirus P protein family. Homotetramer. Interacts (via multimerization domain) with polymerase L; this interaction forms the polymerase L-P complex. Interacts (via N-terminus) with N0 (via Ncore); this interaction allows P to chaperon N0 to avoid N polymerization before encapsidation. Interacts (via C-terminus) with N-RNA template; this interaction positions the polymerase on the template for both transcription and replication. Phosphorylation on serines by host CK2 is necessary for the formation of viral factories.

Its function is as follows. Essential cofactor of the RNA polymerase L that plays a central role in the transcription and replication by forming the polymerase complex with RNA polymerase L and recruiting L to the genomic N-RNA template for RNA synthesis. Also plays a central role in the encapsidation of nascent RNA chains by forming the encapsidation complex with the nucleocapsid protein N (N-P complex). Acts as a chaperone for newly synthesized free N protein, so-called N0, allowing encapsidation of nascent RNA chains during replication. The nucleoprotein protein N prevents excessive phosphorylation of P, which leads to down-regulation of viral transcription/ replication. Participates, together with N, in the formation of viral factories (viroplasms), which are large inclusions in the host cytoplasm where replication takes place. This Canine distemper virus (strain Onderstepoort) (CDV) protein is Phosphoprotein (P/V).